The chain runs to 536 residues: Phosphoenolpyruvate carboxykinase (ATP) (536 aa).

R61, Y195, and K201 together coordinate substrate. ATP is bound by residues K201, H220, and 236 to 244 (GLSGTGKTT). Residues K201 and H220 each coordinate Mn(2+). D257 serves as a coordination point for Mn(2+). ATP contacts are provided by E285, R322, and T447. R322 contributes to the substrate binding site.

This sequence belongs to the phosphoenolpyruvate carboxykinase (ATP) family. Mn(2+) is required as a cofactor.

It localises to the cytoplasm. The catalysed reaction is oxaloacetate + ATP = phosphoenolpyruvate + ADP + CO2. It functions in the pathway carbohydrate biosynthesis; gluconeogenesis. Its function is as follows. Involved in the gluconeogenesis. Catalyzes the conversion of oxaloacetate (OAA) to phosphoenolpyruvate (PEP) through direct phosphoryl transfer between the nucleoside triphosphate and OAA. The chain is Phosphoenolpyruvate carboxykinase (ATP) from Mesorhizobium japonicum (strain LMG 29417 / CECT 9101 / MAFF 303099) (Mesorhizobium loti (strain MAFF 303099)).